Here is a 113-residue protein sequence, read N- to C-terminus: Cytochrome c2 (113 aa).

Heme c contacts are provided by Cys15, Cys18, His19, and Met92.

This sequence belongs to the cytochrome c family. Binds 1 heme c group covalently per subunit.

In terms of biological role, cytochrome c2 is found mainly in purple, non-sulfur, photosynthetic bacteria where it functions as the electron donor to the oxidized bacteriochlorophyll in the photophosphorylation pathway. However, it may also have a role in the respiratory chain and is found in some non-photosynthetic bacteria. The protein is Cytochrome c2 of Pararhodospirillum photometricum (Rhodospirillum photometricum).